The primary structure comprises 104 residues: L-rhamnose mutarotase (104 aa).

Y18 serves as a coordination point for substrate. The Proton donor role is filled by H22. Substrate-binding positions include Y41 and 76–77 (WW).

The protein belongs to the rhamnose mutarotase family. As to quaternary structure, homodimer.

It localises to the cytoplasm. The catalysed reaction is alpha-L-rhamnose = beta-L-rhamnose. It participates in carbohydrate metabolism; L-rhamnose metabolism. In terms of biological role, involved in the anomeric conversion of L-rhamnose. This Shouchella clausii (strain KSM-K16) (Alkalihalobacillus clausii) protein is L-rhamnose mutarotase.